We begin with the raw amino-acid sequence, 150 residues long: Large ribosomal subunit protein bL9 (150 aa).

Belongs to the bacterial ribosomal protein bL9 family.

Its function is as follows. Binds to the 23S rRNA. In Shewanella sediminis (strain HAW-EB3), this protein is Large ribosomal subunit protein bL9.